Consider the following 384-residue polypeptide: MSTKIHQQAVQPGISQQVSTRLAFFIAGLGMAAWAPLVPFAKARIGLNDASLGLLLLCIGIGSMLAMPLTGVLTAKWGCRAVILLAGAVLCLDLPLLVLMNTPATMAIALLVFGAAMGIIDVAMNIQAVIVEKASGRAMMSGFHGLFSVGGIVGAGGVSALLWLGLNPLTAIMATVVLMIILLLAANKNLLRGSGEPHDGPLFVFPRGWVMFIGFLCFVMFLAEGSMLDWSAVFLTTLRGMSPSQAGMGYAVFAIAMTLGRLNGDRIVNGLGRYKVLLGGSLCSAIGIIIAISIDSSMAAIIGFMLVGFGASNVVPILFTAAGNQTVMPANLAVASITTIGYAGILAGPAAIGFIAQLSSLSVAFGCVALLLLTVAASARAVTR.

12 consecutive transmembrane segments (helical) span residues 22–42, 52–72, 81–101, 106–126, 143–163, 164–184, 202–222, 240–260, 276–296, 299–319, 327–347, and 352–372; these read LAFFIAGLGMAAWAPLVPFAK, LGLLLLCIGIGSMLAMPLTGV, AVILLAGAVLCLDLPLLVLMN, MAIALLVFGAAMGIIDVAMNI, FHGLFSVGGIVGAGGVSALLW, LGLNPLTAIMATVVLMIILLL, LFVFPRGWVMFIGFLCFVMFL, GMSPSQAGMGYAVFAIAMTLG, VLLGGSLCSAIGIIIAISIDS, AAIIGFMLVGFGASNVVPILF, VMPANLAVASITTIGYAGILA, and IGFIAQLSSLSVAFGCVALLL.

This sequence belongs to the major facilitator superfamily.

It localises to the membrane. This is an uncharacterized protein from Yersinia pestis.